Here is a 183-residue protein sequence, read N- to C-terminus: MKLIGITGMPGSGKSAITKLAEKYKIVVVSMGDVVRYETLKQGMPLNPENVGNTAVKLREIYGKEAIAVPCLNYVNEKYNNEDFVIIEGIRSIYEVNYIKKHAELDIIAIHSSPKTRFERLSGRNREDDSNDWNTFVERDERELNFSIGRVISLADYMVVNEGNYMDFVNDLENTFKKIINVN.

8–15 (GMPGSGKS) contacts ATP.

It belongs to the UPF0200 family.

This is UPF0200 protein MMP1282 from Methanococcus maripaludis (strain DSM 14266 / JCM 13030 / NBRC 101832 / S2 / LL).